The primary structure comprises 510 residues: NAD(P)H-quinone oxidoreductase subunit 2 B, chloroplastic (510 aa).

The next 13 helical transmembrane spans lie at 24-44, 57-77, 99-119, 124-144, 149-169, 183-203, 227-247, 295-315, 323-343, 354-374, 395-415, 418-438, and 484-504; these read LLLFDGSFIFPECILIFGLIL, IPWLYFISSTSLVMSITALLF, IFQFLILLCSTLCIPLSVEYI, MAIAEFLLFVLTATLGGMFLC, LITIFVAPECFSLCSYLLSGY, YLLMGGASSSILVHGFSWLYG, PGISIALIFITVGIGFKLSPA, WHLLLEILAILSMILGNLIAI, MLAYSSIGQIGYVIIGIIVGN, YMLFYISMNLGTFACIVLFGL, ALSLAPCLLSLGGLPPLAGFF, LHLFWCGWQAGLYFLVSIGLL, and MIVCVIASTIPGISMNPIIAI.

The protein belongs to the complex I subunit 2 family. NDH is composed of at least 16 different subunits, 5 of which are encoded in the nucleus.

The protein localises to the plastid. It localises to the chloroplast thylakoid membrane. It catalyses the reaction a plastoquinone + NADH + (n+1) H(+)(in) = a plastoquinol + NAD(+) + n H(+)(out). The enzyme catalyses a plastoquinone + NADPH + (n+1) H(+)(in) = a plastoquinol + NADP(+) + n H(+)(out). In terms of biological role, NDH shuttles electrons from NAD(P)H:plastoquinone, via FMN and iron-sulfur (Fe-S) centers, to quinones in the photosynthetic chain and possibly in a chloroplast respiratory chain. The immediate electron acceptor for the enzyme in this species is believed to be plastoquinone. Couples the redox reaction to proton translocation, and thus conserves the redox energy in a proton gradient. The sequence is that of NAD(P)H-quinone oxidoreductase subunit 2 B, chloroplastic from Gossypium barbadense (Sea Island cotton).